The sequence spans 194 residues: Peroxynitrite isomerase 1 (194 aa).

Residues 40 to 46 carry the GXWXGXG motif; that stretch reads GVWRGEG. Residues Lys-157 and His-184 each coordinate heme b.

This sequence belongs to the nitrobindin family. As to quaternary structure, homodimer. Heme b serves as cofactor.

It catalyses the reaction peroxynitrite = nitrate. It participates in nitrogen metabolism. In terms of biological role, heme-binding protein able to scavenge peroxynitrite and to protect free L-tyrosine against peroxynitrite-mediated nitration, by acting as a peroxynitrite isomerase that converts peroxynitrite to nitrate. Therefore, this protein likely plays a role in peroxynitrite sensing and in the detoxification of reactive nitrogen and oxygen species (RNS and ROS, respectively). Is able to bind nitric oxide (NO) in vitro, but may act as a sensor of peroxynitrite levels in vivo. This is Peroxynitrite isomerase 1 from Mycobacterium ulcerans (strain Agy99).